A 331-amino-acid chain; its full sequence is RNA 3'-terminal phosphate cyclase (331 aa).

Residues Gln100 and 276-280 contribute to the ATP site; that span reads HLADQ. Catalysis depends on His301, which acts as the Tele-AMP-histidine intermediate.

It belongs to the RNA 3'-terminal cyclase family. Type 1 subfamily.

The protein resides in the cytoplasm. It catalyses the reaction a 3'-end 3'-phospho-ribonucleotide-RNA + ATP = a 3'-end 2',3'-cyclophospho-ribonucleotide-RNA + AMP + diphosphate. Catalyzes the conversion of 3'-phosphate to a 2',3'-cyclic phosphodiester at the end of RNA. The mechanism of action of the enzyme occurs in 3 steps: (A) adenylation of the enzyme by ATP; (B) transfer of adenylate to an RNA-N3'P to produce RNA-N3'PP5'A; (C) and attack of the adjacent 2'-hydroxyl on the 3'-phosphorus in the diester linkage to produce the cyclic end product. The biological role of this enzyme is unknown but it is likely to function in some aspects of cellular RNA processing. This is RNA 3'-terminal phosphate cyclase from Methanosarcina barkeri (strain Fusaro / DSM 804).